Consider the following 207-residue polypeptide: MPTKTVRCLRLLPLASLLLAACSVNQPTQTGKSPTSPEWQKHQQKVQQLTQYQTRGAFAYISDSKRVSANFFWQDTPPQRYRLLLTNPLGSTELELRAQPDGVQITDNQGKRYVGKDAEYMIQQLTGMAIPLNNLRQWILGIPGDATEFTLDERYLLKTITYRQGNQNWDVSYQSYNTELTPPLPTSLELVQGEQRIKLKMNNWMVK.

Residues 1–21 (MPTKTVRCLRLLPLASLLLAA) form the signal peptide. The N-palmitoyl cysteine moiety is linked to residue cysteine 22. Residue cysteine 22 is the site of S-diacylglycerol cysteine attachment.

This sequence belongs to the LolB family. As to quaternary structure, monomer.

It is found in the cell outer membrane. In terms of biological role, plays a critical role in the incorporation of lipoproteins in the outer membrane after they are released by the LolA protein. This chain is Outer-membrane lipoprotein LolB, found in Pectobacterium atrosepticum (strain SCRI 1043 / ATCC BAA-672) (Erwinia carotovora subsp. atroseptica).